Reading from the N-terminus, the 447-residue chain is Phosphoglucosamine mutase (447 aa).

Ser-104 acts as the Phosphoserine intermediate in catalysis. 4 residues coordinate Mg(2+): Ser-104, Asp-243, Asp-245, and Asp-247. The residue at position 104 (Ser-104) is a Phosphoserine.

Belongs to the phosphohexose mutase family. The cofactor is Mg(2+). Post-translationally, activated by phosphorylation.

The enzyme catalyses alpha-D-glucosamine 1-phosphate = D-glucosamine 6-phosphate. Its function is as follows. Catalyzes the conversion of glucosamine-6-phosphate to glucosamine-1-phosphate. This Corynebacterium jeikeium (strain K411) protein is Phosphoglucosamine mutase.